The primary structure comprises 533 residues: DnaJ homolog subfamily C member 21 (533 aa).

Residues 3–70 (CHYEALGVRR…ERAWYDNHRE (68 aa)) form the J domain. 3 disordered regions span residues 278 to 311 (QFGDGSGEDEAEDQELRDGQDGKDSDEAEDAELY), 327 to 473 (KAMR…RVPA), and 503 to 533 (KATGHARAPSSSTSLNSVTNSRNKKEKRKNR). A phosphoserine mark is found at S283 and S302. The segment covering 291–302 (QELRDGQDGKDS) has biased composition (basic and acidic residues). The segment at 315–339 (YCPACDKSFKTEKAMRNHEKSKKHR) adopts a C2H2-type 1 zinc-finger fold. Residues 357–369 (SGPQTDENSLNAN) show a composition bias toward polar residues. S370 is modified (phosphoserine). Residues 381–392 (KLSRKQKKKKQK) show a composition bias toward basic residues. Polar residues predominate over residues 393–403 (PAQNYDDNFNE). Residues 455 to 464 (SKPKGKKAKD) are compositionally biased toward basic residues. A C2H2-type 2 zinc finger spans residues 484 to 508 (SCTTCHSEFPSRNKLFDHLKATGHA). S512 carries the post-translational modification Phosphoserine. A compositionally biased stretch (low complexity) spans 512–523 (SSSTSLNSVTNS). Over residues 524-533 (RNKKEKRKNR) the composition is skewed to basic residues.

Interacts with HSPA8, PA2G4 and ZNF622.

It is found in the cytoplasm. It localises to the nucleus. The protein resides in the nucleolus. Its function is as follows. May act as a co-chaperone for HSP70. May play a role in ribosomal RNA (rRNA) biogenesis, possibly in the maturation of the 60S subunit. Binds the precursor 45S rRNA. The polypeptide is DnaJ homolog subfamily C member 21 (DNAJC21) (Bos taurus (Bovine)).